A 438-amino-acid chain; its full sequence is Citrate synthase (438 aa).

Active-site residues include H306 and D364.

It belongs to the citrate synthase family.

The catalysed reaction is oxaloacetate + acetyl-CoA + H2O = citrate + CoA + H(+). Its pathway is carbohydrate metabolism; tricarboxylic acid cycle; isocitrate from oxaloacetate: step 1/2. The protein is Citrate synthase (gltA) of Bartonella quintana (strain Toulouse) (Rochalimaea quintana).